Here is a 389-residue protein sequence, read N- to C-terminus: MEMKDFIFTSESVSEGHPDKVADQVSDAILDAILTQDPKSRVACETLVTTGMTVVAGEITTNAIVDYPKIVRETIKEIGYNDSAMGFDWETCAVLTSIDKQSPDIAQGVTEGEGLFKEQGAGDQGLMFGYACNETPELMPMSILLSHKLVKKLADVRKSGVLDFLRPDSKSQVSIQYINDRPVHVDTVVISSQHTPEVSYETIKEGIIEEVVKKIIPEELMDAKTRFLINPTGRFVIGGPMGDCGLTGRKIIVDSYGGHGAHGGGAFSGKDPSKVDRSAAYMGRYVAKNLVAAGLCEKCEVQVAYAIGVAEPVSVMVDTSGTGKIPSARIAQIVREVFDLRPRAIIEQLDLLRPIYKKTAAYGHFGRELPEFTWERTDKVSIIREKAGI.

Residue His17 coordinates ATP. Residue Asp19 coordinates Mg(2+). Glu45 serves as a coordination point for K(+). L-methionine-binding residues include Glu58 and Gln101. Residues 101–111 (QSPDIAQGVTE) are flexible loop. Residues 168 to 170 (DSK), 234 to 235 (RF), Asp243, 249 to 250 (RK), Ala266, and Lys270 contribute to the ATP site. Position 243 (Asp243) interacts with L-methionine. Lys274 is an L-methionine binding site.

It belongs to the AdoMet synthase family. In terms of assembly, homotetramer; dimer of dimers. The cofactor is Mg(2+). K(+) is required as a cofactor.

The protein resides in the cytoplasm. It carries out the reaction L-methionine + ATP + H2O = S-adenosyl-L-methionine + phosphate + diphosphate. It functions in the pathway amino-acid biosynthesis; S-adenosyl-L-methionine biosynthesis; S-adenosyl-L-methionine from L-methionine: step 1/1. Functionally, catalyzes the formation of S-adenosylmethionine (AdoMet) from methionine and ATP. The overall synthetic reaction is composed of two sequential steps, AdoMet formation and the subsequent tripolyphosphate hydrolysis which occurs prior to release of AdoMet from the enzyme. The chain is S-adenosylmethionine synthase from Geotalea uraniireducens (strain Rf4) (Geobacter uraniireducens).